Reading from the N-terminus, the 570-residue chain is Sulfite reductase [NADPH] hemoprotein beta-component (570 aa).

[4Fe-4S] cluster-binding residues include C434, C440, C479, and C483. Position 483 (C483) interacts with siroheme.

This sequence belongs to the nitrite and sulfite reductase 4Fe-4S domain family. Alpha(8)-beta(8). The alpha component is a flavoprotein, the beta component is a hemoprotein. Siroheme is required as a cofactor. The cofactor is [4Fe-4S] cluster.

The catalysed reaction is hydrogen sulfide + 3 NADP(+) + 3 H2O = sulfite + 3 NADPH + 4 H(+). It functions in the pathway sulfur metabolism; hydrogen sulfide biosynthesis; hydrogen sulfide from sulfite (NADPH route): step 1/1. Component of the sulfite reductase complex that catalyzes the 6-electron reduction of sulfite to sulfide. This is one of several activities required for the biosynthesis of L-cysteine from sulfate. The polypeptide is Sulfite reductase [NADPH] hemoprotein beta-component (Escherichia coli O17:K52:H18 (strain UMN026 / ExPEC)).